The primary structure comprises 270 residues: Elongation factor Tu (270 aa).

The tr-type G domain maps to 1–103 (GILVVSAADG…AVDDYIPTPE (103 aa)). 35-38 (NKVD) contacts GTP.

The protein belongs to the TRAFAC class translation factor GTPase superfamily. Classic translation factor GTPase family. EF-Tu/EF-1A subfamily. As to quaternary structure, monomer.

Its subcellular location is the cytoplasm. The enzyme catalyses GTP + H2O = GDP + phosphate + H(+). Its function is as follows. GTP hydrolase that promotes the GTP-dependent binding of aminoacyl-tRNA to the A-site of ribosomes during protein biosynthesis. This is Elongation factor Tu (tuf) from Staphylococcus warneri.